A 50-amino-acid chain; its full sequence is Tubulin alpha chain (50 aa).

Residue N28 participates in GTP binding. E40 is a catalytic residue.

This sequence belongs to the tubulin family. In terms of assembly, dimer of alpha and beta chains. A typical microtubule is a hollow water-filled tube with an outer diameter of 25 nm and an inner diameter of 15 nM. Alpha-beta heterodimers associate head-to-tail to form protofilaments running lengthwise along the microtubule wall with the beta-tubulin subunit facing the microtubule plus end conferring a structural polarity. Microtubules usually have 13 protofilaments but different protofilament numbers can be found in some organisms and specialized cells. Mg(2+) is required as a cofactor.

Its subcellular location is the cytoplasm. It is found in the cytoskeleton. The enzyme catalyses GTP + H2O = GDP + phosphate + H(+). Its function is as follows. Tubulin is the major constituent of microtubules, a cylinder consisting of laterally associated linear protofilaments composed of alpha- and beta-tubulin heterodimers. Microtubules grow by the addition of GTP-tubulin dimers to the microtubule end, where a stabilizing cap forms. Below the cap, tubulin dimers are in GDP-bound state, owing to GTPase activity of alpha-tubulin. The polypeptide is Tubulin alpha chain (Populus euphratica (Euphrates poplar)).